The following is a 124-amino-acid chain: Small ribosomal subunit protein uS12 (124 aa).

Asp89 is modified (3-methylthioaspartic acid).

Belongs to the universal ribosomal protein uS12 family. In terms of assembly, part of the 30S ribosomal subunit. Contacts proteins S8 and S17. May interact with IF1 in the 30S initiation complex.

With S4 and S5 plays an important role in translational accuracy. Functionally, interacts with and stabilizes bases of the 16S rRNA that are involved in tRNA selection in the A site and with the mRNA backbone. Located at the interface of the 30S and 50S subunits, it traverses the body of the 30S subunit contacting proteins on the other side and probably holding the rRNA structure together. The combined cluster of proteins S8, S12 and S17 appears to hold together the shoulder and platform of the 30S subunit. In Shewanella frigidimarina (strain NCIMB 400), this protein is Small ribosomal subunit protein uS12.